The chain runs to 612 residues: Chaperone protein DnaK (612 aa).

Thr-173 is subject to Phosphothreonine; by autocatalysis. Positions Asp-524 to Gln-544 are enriched in basic and acidic residues. Disordered stretches follow at residues Asp-524–Ala-560 and Leu-572–Lys-612. Low complexity predominate over residues Glu-574–Glu-586. A compositionally biased stretch (acidic residues) spans Gln-587–Lys-612.

The protein belongs to the heat shock protein 70 family.

Functionally, acts as a chaperone. This is Chaperone protein DnaK from Oceanobacillus iheyensis (strain DSM 14371 / CIP 107618 / JCM 11309 / KCTC 3954 / HTE831).